The following is a 122-amino-acid chain: Large ribosomal subunit protein uL14c (122 aa).

This sequence belongs to the universal ribosomal protein uL14 family. In terms of assembly, part of the 50S ribosomal subunit.

It is found in the plastid. It localises to the chloroplast. In terms of biological role, binds to 23S rRNA. The protein is Large ribosomal subunit protein uL14c of Amborella trichopoda.